Reading from the N-terminus, the 180-residue chain is D-lyxose ketol-isomerase (180 aa).

Lys62 contributes to the D-fructose binding site. Mn(2+) is bound by residues His75 and His77. Lys86 is a binding site for D-fructose. Residues Glu88 and His143 each coordinate Mn(2+). Residues Glu156, Asp166, and Arg175 each coordinate D-fructose.

It belongs to the D-lyxose ketol-isomerase family. As to quaternary structure, homodimer; disulfide-linked. Stabilized by a disulfide bond between the two monomers of the dimeric enzyme and increased hydrophobicity at the dimer interface. It depends on Mn(2+) as a cofactor.

It carries out the reaction D-lyxose = D-xylulose. Its function is as follows. Sugar isomerase that catalyzes the reversible isomerization of D-lyxose to D-xylulose. Is highly specific for the substrate D-lyxose, showing less than 2% activity towards mannose and other substrates reported for lyxose isomerases. The sequence is that of D-lyxose ketol-isomerase from Thermofilum sp. (strain ex4484_79).